Here is a 173-residue protein sequence, read N- to C-terminus: Alpha-crystallin A chain (173 aa).

Position 1 is an N-acetylmethionine (Met-1). The required for complex formation with BFSP1 and BFSP2 stretch occupies residues 1–63; it reads MDIAIQHPWF…RTVLDSGISE (63 aa). Residue Gln-6 is modified to Deamidated glutamine; partial. Ser-45 bears the Phosphoserine mark. Position 50 is a deamidated glutamine; partial (Gln-50). The sHSP domain occupies 52-162; that stretch reads LFRTVLDSGI…GHSERAIPVS (111 aa). An N6-acetyllysine modification is found at Lys-70. Deamidated glutamine; partial is present on Gln-90. The residue at position 99 (Lys-99) is an N6-acetyllysine. His-100 is a Zn(2+) binding site. Asn-101 bears the Deamidated asparagine; partial mark. Zn(2+) is bound by residues Glu-102 and His-107. Residue Ser-122 is modified to Phosphoserine. The residue at position 123 (Asn-123) is a Deamidated asparagine; partial. Positions 144-173 are disordered; it reads PKVPSGVDAGHSERAIPVSREEKPSSAPSS. The segment covering 153-167 has biased composition (basic and acidic residues); sequence GHSERAIPVSREEKP. Zn(2+) is bound at residue His-154. A glycan (O-linked (GlcNAc) serine) is linked at Ser-162.

It belongs to the small heat shock protein (HSP20) family. As to quaternary structure, heteromer composed of three CRYAA and one CRYAB subunits. Inter-subunit bridging via zinc ions enhances stability, which is crucial as there is no protein turn over in the lens. Can also form homodimers and homotetramers (dimers of dimers) which serve as the building blocks of homooligomers. Within homooligomers, the zinc-binding motif is created from residues of 3 different molecules. His-100 and Glu-102 from one molecule are ligands of the zinc ion, and His-107 and His-154 residues from additional molecules complete the site with tetrahedral coordination geometry. Part of a complex required for lens intermediate filament formation composed of BFSP1, BFSP2 and CRYAA. Acetylation at Lys-70 may increase chaperone activity. Post-translationally, undergoes age-dependent proteolytical cleavage at the C-terminus.

Its subcellular location is the cytoplasm. The protein localises to the nucleus. Its function is as follows. Contributes to the transparency and refractive index of the lens. Acts as a chaperone, preventing aggregation of various proteins under a wide range of stress conditions. Required for the correct formation of lens intermediate filaments as part of a complex composed of BFSP1, BFSP2 and CRYAA. This Ovis aries (Sheep) protein is Alpha-crystallin A chain (CRYAA).